The sequence spans 300 residues: tRNA pseudouridine synthase A (300 aa).

The Nucleophile role is filled by Asp-67. Residue Tyr-125 coordinates substrate.

It belongs to the tRNA pseudouridine synthase TruA family. Homodimer.

It carries out the reaction uridine(38/39/40) in tRNA = pseudouridine(38/39/40) in tRNA. Functionally, formation of pseudouridine at positions 38, 39 and 40 in the anticodon stem and loop of transfer RNAs. This is tRNA pseudouridine synthase A from Synechococcus sp. (strain CC9902).